We begin with the raw amino-acid sequence, 71 residues long: Translation initiation factor IF-1 (71 aa).

The S1-like domain occupies Met1–His71.

This sequence belongs to the IF-1 family. As to quaternary structure, component of the 30S ribosomal translation pre-initiation complex which assembles on the 30S ribosome in the order IF-2 and IF-3, IF-1 and N-formylmethionyl-tRNA(fMet); mRNA recruitment can occur at any time during PIC assembly.

The protein resides in the cytoplasm. Functionally, one of the essential components for the initiation of protein synthesis. Stabilizes the binding of IF-2 and IF-3 on the 30S subunit to which N-formylmethionyl-tRNA(fMet) subsequently binds. Helps modulate mRNA selection, yielding the 30S pre-initiation complex (PIC). Upon addition of the 50S ribosomal subunit IF-1, IF-2 and IF-3 are released leaving the mature 70S translation initiation complex. The sequence is that of Translation initiation factor IF-1 from Rickettsia felis (strain ATCC VR-1525 / URRWXCal2) (Rickettsia azadi).